The chain runs to 126 residues: Prostate and testis expressed protein 1 (126 aa).

The first 21 residues, 1 to 21 (MDKSLLLELPILLCCFRALSG), serve as a signal peptide directing secretion. Residues 46–125 (VQCRMCHLQF…CRSHDLCNED (80 aa)) enclose the UPAR/Ly6 domain. Intrachain disulfides connect cysteine 48-cysteine 75, cysteine 51-cysteine 60, cysteine 67-cysteine 94, and cysteine 98-cysteine 115.

Belongs to the PATE family. In terms of tissue distribution, expressed specifically in prostate cancer, normal prostate, and testis. Expressed in the epithelial cells of the prostate cancer and normal prostate tissues.

It is found in the secreted. This chain is Prostate and testis expressed protein 1 (PATE1), found in Homo sapiens (Human).